Here is a 388-residue protein sequence, read N- to C-terminus: Succinate--CoA ligase [ADP-forming] subunit beta (388 aa).

The region spanning 9–244 (KQLFAEYGLP…PSQEDSREAE (236 aa)) is the ATP-grasp domain. ATP-binding positions include Lys46, 53 to 55 (GRG), Glu99, Thr102, and Glu107. Asn199 and Asp213 together coordinate Mg(2+). Residues Asn264 and 321-323 (GIV) contribute to the substrate site.

This sequence belongs to the succinate/malate CoA ligase beta subunit family. As to quaternary structure, heterotetramer of two alpha and two beta subunits. Mg(2+) is required as a cofactor.

It carries out the reaction succinate + ATP + CoA = succinyl-CoA + ADP + phosphate. It catalyses the reaction GTP + succinate + CoA = succinyl-CoA + GDP + phosphate. Its pathway is carbohydrate metabolism; tricarboxylic acid cycle; succinate from succinyl-CoA (ligase route): step 1/1. Functionally, succinyl-CoA synthetase functions in the citric acid cycle (TCA), coupling the hydrolysis of succinyl-CoA to the synthesis of either ATP or GTP and thus represents the only step of substrate-level phosphorylation in the TCA. The beta subunit provides nucleotide specificity of the enzyme and binds the substrate succinate, while the binding sites for coenzyme A and phosphate are found in the alpha subunit. This chain is Succinate--CoA ligase [ADP-forming] subunit beta, found in Marinobacter nauticus (strain ATCC 700491 / DSM 11845 / VT8) (Marinobacter aquaeolei).